Here is a 179-residue protein sequence, read N- to C-terminus: Inner membrane-spanning protein YciB (179 aa).

Helical transmembrane passes span 24–44 (TATG…YAME), 49–69 (AMQK…LVLH), 76–96 (WKPT…LWAL), 121–141 (VAWI…AAYF), and 151–171 (LWGY…ISPH).

It belongs to the YciB family.

It localises to the cell inner membrane. Plays a role in cell envelope biogenesis, maintenance of cell envelope integrity and membrane homeostasis. This is Inner membrane-spanning protein YciB from Variovorax paradoxus (strain S110).